The primary structure comprises 150 residues: UPF0178 protein Sbal_1771 (150 aa).

It belongs to the UPF0178 family.

This is UPF0178 protein Sbal_1771 from Shewanella baltica (strain OS155 / ATCC BAA-1091).